Reading from the N-terminus, the 210-residue chain is Ribosomal RNA large subunit methyltransferase E (210 aa).

G61, W63, D81, D97, and D122 together coordinate S-adenosyl-L-methionine. The active-site Proton acceptor is the K162.

The protein belongs to the class I-like SAM-binding methyltransferase superfamily. RNA methyltransferase RlmE family.

The protein localises to the cytoplasm. It catalyses the reaction uridine(2552) in 23S rRNA + S-adenosyl-L-methionine = 2'-O-methyluridine(2552) in 23S rRNA + S-adenosyl-L-homocysteine + H(+). Its function is as follows. Specifically methylates the uridine in position 2552 of 23S rRNA at the 2'-O position of the ribose in the fully assembled 50S ribosomal subunit. The chain is Ribosomal RNA large subunit methyltransferase E from Xanthomonas axonopodis pv. citri (strain 306).